The following is a 301-amino-acid chain: Multifunctional dioxygenase prhA (301 aa).

3 residues coordinate Fe cation: H130, D132, and H214.

It belongs to the PhyH family. Homodimer. Fe cation serves as cofactor.

The enzyme catalyses preaustinoid A1 + 2-oxoglutarate + O2 = berkeleyone B + succinate + CO2 + H2O. It catalyses the reaction berkeleyone B + 2-oxoglutarate + O2 = berkeleydione + succinate + CO2 + H2O. The catalysed reaction is preaustinoid A + 2 2-oxoglutarate + 2 O2 = berkeleytrione + 2 succinate + 2 CO2 + H2O. The protein operates within secondary metabolite biosynthesis; terpenoid biosynthesis. Functionally, multifunctional dioxygenase; part of the gene cluster that mediates the biosynthesis of paraherquonin, a meroterpenoid with a unique, highly congested hexacyclic molecular architecture. The first step of the pathway is the synthesis of 3,5-dimethylorsellinic acid (DMOA) by the polyketide synthase prhL. Synthesis of DMOA is followed by farnesylation by the prenyltransferase prhE, methylesterification by the methyl-transferase prhM, epoxidation of the prenyl chain by the flavin-dependent monooxygenase prhF, and cyclization of the farnesyl moiety by the terpene cyclase prhH, to yield the tetracyclic intermediate, protoaustinoid A. The short chain dehydrogenase prhI then oxidizes the C-3 alcohol group of the terpene cyclase product to transform protoaustinoid A into protoaustinoid B. The FAD-binding monooxygenase prhJ catalyzes the oxidation of protoaustinoid B into preaustinoid A which is further oxidized into preaustinoid A1 by FAD-binding monooxygenase phrK. Finally, prhA leads to berkeleydione via the berkeleyone B intermediate. PrhA is a multifunctional dioxygenase that first desaturates at C5-C6 to form berkeleyone B, followed by rearrangement of the A/B-ring to form the cycloheptadiene moiety in berkeleydione. Berkeleydione serves as the key intermediate for the biosynthesis of paraherquonin as well as many other meroterpenoids. The cytochrome P450 monooxygenases prhB, prhD, and prhN, as well as the isomerase prhC, are probably involved in the late stage of paraherquonin biosynthesis, after the production of berkeleydione. Especially prhC might be a multifunctional enzyme that catalyzes the D-ring expansion via intramolecular methoxy rearrangement, as well as the hydrolysis of the expanded D-ring. In Penicillium brasilianum, this protein is Multifunctional dioxygenase prhA.